An 823-amino-acid chain; its full sequence is Transcription factor SPT20 homolog-like 1 (823 aa).

Disordered regions lie at residues 246 to 273, 369 to 524, 560 to 601, 631 to 669, and 720 to 757; these read SVKP…KEER, PRKK…AAQP, GSSF…AVQA, VLTG…LGLS, and LRQQ…PQHI. A compositionally biased stretch (polar residues) spans 423–440; that stretch reads SHSSSGPASVSQLSSWKT. Low complexity-rich tracts occupy residues 469-509, 568-582, and 636-650; these read SSSG…QKPS, APGS…ISGS, and QQQS…QLQQ.

The protein belongs to the SPT20 family.

The polypeptide is Transcription factor SPT20 homolog-like 1 (SUPT20HL1) (Homo sapiens (Human)).